Consider the following 290-residue polypeptide: 33 kDa chaperonin (290 aa).

Intrachain disulfides connect Cys-236–Cys-238 and Cys-269–Cys-272.

Belongs to the HSP33 family. Under oxidizing conditions two disulfide bonds are formed involving the reactive cysteines. Under reducing conditions zinc is bound to the reactive cysteines and the protein is inactive.

It localises to the cytoplasm. Its function is as follows. Redox regulated molecular chaperone. Protects both thermally unfolding and oxidatively damaged proteins from irreversible aggregation. Plays an important role in the bacterial defense system toward oxidative stress. This is 33 kDa chaperonin from Acholeplasma laidlawii (strain PG-8A).